The following is a 400-amino-acid chain: Na(+)/H(+) antiporter NhaA (400 aa).

11 consecutive transmembrane segments (helical) span residues 10–30 (FNLE…AMII), 60–80 (AHHW…GLEL), 95–115 (IILP…VYLF), 126–146 (GWAI…SLLG), 155–175 (VFLV…IALF), 178–198 (NDLS…LYML), 218–238 (IAVL…ALFI), 265–285 (GILP…AGFG), 295–315 (IAAG…WLIF), 334–354 (AALL…LAFA), and 364–384 (LGII…LKTT).

This sequence belongs to the NhaA Na(+)/H(+) (TC 2.A.33) antiporter family.

Its subcellular location is the cell inner membrane. The enzyme catalyses Na(+)(in) + 2 H(+)(out) = Na(+)(out) + 2 H(+)(in). Na(+)/H(+) antiporter that extrudes sodium in exchange for external protons. The protein is Na(+)/H(+) antiporter NhaA of Psychrobacter arcticus (strain DSM 17307 / VKM B-2377 / 273-4).